The primary structure comprises 597 residues: MKNIRNFSIIAHIDHGKSTLADRFIQYCGGLDLREMSTQVLDSMDIEKERGITIKAQTAALNYKARDGQVYQLNLIDTPGHVDFSYEVSRSLSACEGALLVVDASQGVEAQTVANCYTAIDLGVEVVPVLNKIDLPAADPERVEQEIEDIIGIDAVGAVQCSAKSGIGVEDVLEEIVAKIPAPAGDENAPLQAVIVDSWFDNYVGVVMLIRVKNGTIKLKDKVRFMSTKAETQVEQLGVFTPKSVQKQELKAGEVGFLITGVKELGQAKVGDTVTLIANPASEPLPGFQEVQSQVFAGLYPVESHDYEALRDALEKLQLNDASLKFEPEVSQALGFGFRCGFLGLLHLEIVQERLEREFDMDLITTAPTVVYEVVLKNGEKIEVENPSKLPDIGSIETILEPIITATILVPQEYVGNVMTLCNQKRGVQVNMQYMGRQVMLTYDLPMNEVVMDFFDKLKSTSRGYASLDYHFKEFQPSDLIKLDIMVNGEKVDALSLIVHRQSAVHRGRELASKMRELIPRQMFDIAVQAAIGSQIIARENVKALRKNVLAKCYGGDITRKKKLLEKQKAGKRRMKQVGNVEIPQSAFLAILQVSDK.

Residues 2–184 form the tr-type G domain; that stretch reads KNIRNFSIIA…EIVAKIPAPA (183 aa). GTP contacts are provided by residues 14–19 and 131–134; these read DHGKST and NKID.

It belongs to the TRAFAC class translation factor GTPase superfamily. Classic translation factor GTPase family. LepA subfamily.

It localises to the cell inner membrane. It carries out the reaction GTP + H2O = GDP + phosphate + H(+). In terms of biological role, required for accurate and efficient protein synthesis under certain stress conditions. May act as a fidelity factor of the translation reaction, by catalyzing a one-codon backward translocation of tRNAs on improperly translocated ribosomes. Back-translocation proceeds from a post-translocation (POST) complex to a pre-translocation (PRE) complex, thus giving elongation factor G a second chance to translocate the tRNAs correctly. Binds to ribosomes in a GTP-dependent manner. The polypeptide is Elongation factor 4 (Neisseria meningitidis serogroup A / serotype 4A (strain DSM 15465 / Z2491)).